The following is a 391-amino-acid chain: 3-ketoacyl-CoA thiolase (391 aa).

Cys95 serves as the catalytic Acyl-thioester intermediate. Residues His347 and Cys377 each act as proton acceptor in the active site.

It belongs to the thiolase-like superfamily. Thiolase family. Heterotetramer of two alpha chains (FadB) and two beta chains (FadA).

Its subcellular location is the cytoplasm. The enzyme catalyses an acyl-CoA + acetyl-CoA = a 3-oxoacyl-CoA + CoA. The protein operates within lipid metabolism; fatty acid beta-oxidation. Its function is as follows. Catalyzes the final step of fatty acid oxidation in which acetyl-CoA is released and the CoA ester of a fatty acid two carbons shorter is formed. The chain is 3-ketoacyl-CoA thiolase from Pseudomonas syringae pv. syringae (strain B728a).